The following is a 104-amino-acid chain: Ig kappa chain b5 variant C region (104 aa).

Residues 5–100 (PTVLIFPPSP…SGSPVVQSFS (96 aa)) enclose the Ig-like domain. A disulfide bridge connects residues Cys26 and Cys85.

The chain is Ig kappa chain b5 variant C region from Oryctolagus cuniculus (Rabbit).